A 157-amino-acid polypeptide reads, in one-letter code: S-ribosylhomocysteine lyase (157 aa).

Residues His-53, His-57, and Cys-124 each coordinate Fe cation.

Belongs to the LuxS family. In terms of assembly, homodimer. Requires Fe cation as cofactor.

It catalyses the reaction S-(5-deoxy-D-ribos-5-yl)-L-homocysteine = (S)-4,5-dihydroxypentane-2,3-dione + L-homocysteine. Its function is as follows. Involved in the synthesis of autoinducer 2 (AI-2) which is secreted by bacteria and is used to communicate both the cell density and the metabolic potential of the environment. The regulation of gene expression in response to changes in cell density is called quorum sensing. Catalyzes the transformation of S-ribosylhomocysteine (RHC) to homocysteine (HC) and 4,5-dihydroxy-2,3-pentadione (DPD). The sequence is that of S-ribosylhomocysteine lyase from Borreliella afzelii (strain PKo) (Borrelia afzelii).